The chain runs to 872 residues: Adhesive plaque matrix protein (872 aa).

Positions 1–20 (MEGIKLNLCLLCIFSCDIFA) are cleaved as a signal peptide. The segment at 21–41 (LSNGNIHNVYGSAYSGASAGA) is nonrepetitive linker. A run of 69 repeats spans residues 124–133 (YKAKTSYPPS), 134–143 (YKHKITYPPT), 144–153 (YKPKITYPPT), 154–163 (YKQKPSYPPS), 174–183 (YKPKITYPPT), 184–192 (YKRKPSYTP), 193–202 (YKPKATYPPT), 203–212 (YKPKITYPPT), 213–221 (YKRKPSYTP), 222–231 (YKPKTTYPPT), 232–241 (YKPKISYPSI), 242–251 (YKPKASYVSS), 252–261 (YKSKKTYPPT), 262–271 (YKPKISYPPT), 272–281 (YKPKPSYPPT), 282–291 (YKPKVTYPPT), 292–301 (YKPKPSYPPT), 302–311 (YKPKITYPPT), 312–321 (YKPKPSYPTP), 322–331 (YKQKPSYPPI), 332–341 (YKSKSSYPTS), 342–351 (YKSKKTYPPT), 352–361 (YKPKITYPPT), 362–371 (YKPKPSYPPS), 372–381 (YKPKKTYSPT), 382–391 (YKPKITYPPT), 402–411 (YKPKTTYPPT), 412–421 (YKPKISYPPT), 422–431 (YKPKASYVSS), 432–441 (YKSKKTYPPT), 442–451 (YKPKISYPPT), 452–461 (YKPKPSYPPT), 462–471 (YKPKITYPPT), 472–481 (YKPKPSYPPT), 482–491 (YKPKITYPPT), 502–511 (YKQKPSYPPI), 512–521 (YKSKSSYPTS), 522–531 (YKSKKTYPPT), 532–541 (YKPKITYPPT), 542–551 (YKPKPSYPPS), 552–561 (YKPKTTYPPT), 562–571 (YKPKIRYPPT), 572–581 (YKPKASYPPT), 582–591 (YKPKITYPPT), 602–611 (YKQKPSYPPI), 612–621 (YKSKSSYPTA), 622–631 (YKSKKTYPPT), 632–641 (YKPKITYPPT), 642–651 (YKPKPSYPPS), 652–661 (YRPKITYPPT), 662–671 (YKPKKSYPQA), 672–681 (YKSKGSYPPS), 682–691 (YQPKKTYPPS), 702–711 (YKPKISYPPT), 712–721 (YKTKPSYPAS), 722–731 (YKRKTSYPPT), 732–741 (YKPKISYPST), 742–751 (YKAKPSYPPT), 752–761 (YKPKPSYASS), 762–771 (YKPKIRYPPT), 772–781 (YKPKPSYASS), 782–791 (YKPKIRYPPT), 792–801 (YKPKPSYASS), 812–821 (YKPKPSYASS), 822–831 (YKPKITYPPT), 832–841 (YKPKISYPPT), 842–851 (YKPKITYPPT), 852–861 (YKPKISYPPA), and 862–871 (YKPKISYPSQ). The tract at residues 124 to 871 (YKAKTSYPPS…YKPKISYPSQ (748 aa)) is 69 X 10 AA tandem repeats of Y-[KRQ]-[PSTAHQR]-K-[AIPTSKGV]-[STR]-Y-[PTSVA]-[PSTQA]-[STYIPAQ]. The interval 184-192 (YKRKPSYTP) is nonapeptide 1. Residues 213 to 221 (YKRKPSYTP) are nonapeptide 2. 2 stretches are compositionally biased toward pro residues: residues 273-282 (KPKPSYPPTY) and 291-302 (TYKPKPSYPPTY). Residues 273 to 781 (KPKPSYPPTY…YKPKPSYASS (509 aa)) are disordered. Residues 320 to 360 (TPYKQKPSYPPIYKSKSSYPTSYKSKKTYPPTYKPKITYPP) show a composition bias toward low complexity. Positions 361 to 372 (TYKPKPSYPPSY) are enriched in pro residues. Residues 377–390 (TYSPTYKPKITYPP) are compositionally biased toward low complexity. Residues 391-402 (TYKPKPSYPPSY) are compositionally biased toward pro residues. Residues 403 to 450 (KPKTTYPPTYKPKISYPPTYKPKASYVSSYKSKKTYPPTYKPKISYPP) show a composition bias toward low complexity. Pro residues-rich tracts occupy residues 451–462 (TYKPKPSYPPTY) and 471–482 (TYKPKPSYPPTY). The segment covering 501 to 540 (PYKQKPSYPPIYKSKSSYPTSYKSKKTYPPTYKPKITYPP) has biased composition (low complexity). The span at 541–552 (TYKPKPSYPPSY) shows a compositional bias: pro residues. Composition is skewed to low complexity over residues 568–590 (YPPT…TYPP) and 600–640 (TPYK…TYPP). Residues 641-652 (TYKPKPSYPPSY) are compositionally biased toward pro residues. 2 stretches are compositionally biased toward low complexity: residues 677-690 (SYPP…TYPP) and 698-719 (YPPT…PSYP). Low complexity predominate over residues 754-763 (PKPSYASSYK).

Post-translationally, hydroxylated on proline (mono- or dihydroxylation) and tyrosine residues (to L-DOPA = 3',4'-dihydroxyphenylalanine) of the tandem repeats. Produced by the byssal gland.

The protein localises to the secreted. Provides adhesiveness to the mussel's foot. Mussels produce one of the strongest water insoluble glues. The mussel's adhesive is a bundle of threads, called a byssus, formed by a fibrous collagenous core coated with adhesive proteins. The sequence is that of Adhesive plaque matrix protein (FP1) from Mytilus coruscus (Sea mussel).